The primary structure comprises 186 residues: RIO-type serine/threonine-protein kinase Rio1 (186 aa).

Lysine 15 lines the ATP pocket. Aspartate 124 functions as the Proton acceptor in the catalytic mechanism. Mg(2+) contacts are provided by asparagine 129 and aspartate 140. The 4-aspartylphosphate intermediate role is filled by aspartate 140.

Belongs to the protein kinase superfamily. RIO-type Ser/Thr kinase family.

The enzyme catalyses L-seryl-[protein] + ATP = O-phospho-L-seryl-[protein] + ADP + H(+). It catalyses the reaction L-threonyl-[protein] + ATP = O-phospho-L-threonyl-[protein] + ADP + H(+). The catalysed reaction is ATP + H2O = ADP + phosphate + H(+). Functionally, despite the protein kinase domain is proposed to act predominantly as an ATPase. This chain is RIO-type serine/threonine-protein kinase Rio1 (rio1), found in Thermoplasma acidophilum (strain ATCC 25905 / DSM 1728 / JCM 9062 / NBRC 15155 / AMRC-C165).